A 236-amino-acid polypeptide reads, in one-letter code: MNKLITLLLAVLMIISCVYSDDVEITDDEVVQATPTSDVSFSYIFPDNQDKNFAAGSVVEVLVGFTNNADKALNITHIFASLNHPQDFSVFIQNYTRGDFGIAVEKGHHATLAYRFVPSEYLEPREFGLLISLEYQDGAQNFTQTFFNSTINITEKETSFDMDSFFLILLGLGFVGGIGYIVYGKMPKQKKVRTVSKVNKNAVRVETEDETAEWLSGTSAASSKVKSVQKVVKKNK.

Residues 1-20 (MNKLITLLLAVLMIISCVYS) form the signal peptide. The Lumenal segment spans residues 21–163 (DDVEITDDEV…TEKETSFDMD (143 aa)). N-linked (GlcNAc...) asparagine glycans are attached at residues asparagine 74, asparagine 94, asparagine 141, asparagine 148, and asparagine 152. Residues 164 to 184 (SFFLILLGLGFVGGIGYIVYG) traverse the membrane as a helical segment. Residues 185 to 236 (KMPKQKKVRTVSKVNKNAVRVETEDETAEWLSGTSAASSKVKSVQKVVKKNK) are Cytoplasmic-facing.

The protein belongs to the TRAP-alpha family. Heterotrimer of TRAP-alpha, TRAP-beta and TRAP-gamma. Post-translationally, phosphorylated in its cytoplasmic tail.

The protein localises to the endoplasmic reticulum membrane. Its function is as follows. TRAP proteins are part of a complex whose function is to bind calcium to the ER membrane and thereby regulate the retention of ER resident proteins. The chain is Translocon-associated protein subunit alpha (ssr1) from Dictyostelium discoideum (Social amoeba).